The following is a 366-amino-acid chain: Ribosomal RNA small subunit methyltransferase H 1 (366 aa).

The disordered stretch occupies residues 1-46 (MADQNINKNEKVLTGQPTENQEPVHKRRERYKGTHPKTFKEKYKER). Residues 25-37 (HKRRERYKGTHPK) are compositionally biased toward basic residues. S-adenosyl-L-methionine contacts are provided by residues 97–99 (GGH), aspartate 117, phenylalanine 147, aspartate 166, and glutamine 173.

It belongs to the methyltransferase superfamily. RsmH family.

The protein resides in the cytoplasm. It catalyses the reaction cytidine(1402) in 16S rRNA + S-adenosyl-L-methionine = N(4)-methylcytidine(1402) in 16S rRNA + S-adenosyl-L-homocysteine + H(+). Functionally, specifically methylates the N4 position of cytidine in position 1402 (C1402) of 16S rRNA. This chain is Ribosomal RNA small subunit methyltransferase H 1, found in Lachnoclostridium phytofermentans (strain ATCC 700394 / DSM 18823 / ISDg) (Clostridium phytofermentans).